Consider the following 261-residue polypeptide: Transmembrane protein 106A (261 aa).

Residues 95-115 form a helical membrane-spanning segment; the sequence is VFLAVSICLVTSSLIIFFLFP.

Belongs to the TMEM106 family.

Its subcellular location is the cell membrane. In terms of biological role, activates macrophages and polarizes them into M1-like macrophages through the activation of the MAPK and NF-kappaB signaling pathway. Upon activation, up-regulates the expression of CD80, CD86, CD69 and MHC II on macrophages, and induces the release of pro-inflammatory cytokines such as TNF, IL1B, IL6, CCL2 and nitric oxide. May play a role in inhibition of proliferation and migration. This chain is Transmembrane protein 106A (TMEM106A), found in Bos taurus (Bovine).